The primary structure comprises 326 residues: Nine-heme cytochrome c (326 aa).

A signal peptide spans 1–30 (MRNGTSLLLLAAIALAGAACLTAMGGTAKA). The heme site is built by His67, His70, Cys77, Cys80, His81, His82, Cys89, Cys92, His93, His111, Cys127, Cys130, His131, Cys141, Cys144, His145, Cys157, Cys160, His161, His227, His230, His248, Cys255, Cys258, His259, His260, Cys271, Cys274, His275, His294, Cys297, Cys300, His301, Cys314, Cys317, and His318.

In terms of assembly, monomer. Post-translationally, binds 9 heme groups per subunit.

It is found in the periplasm. Functionally, may form part of a transmembrane redox complex through which electrons are transferred to the cytoplasm for reduction of sulfate. This chain is Nine-heme cytochrome c, found in Desulfovibrio desulfuricans (strain ATCC 27774 / DSM 6949 / MB).